Here is a 209-residue protein sequence, read N- to C-terminus: Uracil phosphoribosyltransferase (209 aa).

5-phospho-alpha-D-ribose 1-diphosphate-binding positions include R79, R104, and 131-139 (DPMLATGGS). Residues I194 and 199-201 (GDA) each bind uracil. D200 contacts 5-phospho-alpha-D-ribose 1-diphosphate.

The protein belongs to the UPRTase family. Mg(2+) serves as cofactor.

The enzyme catalyses UMP + diphosphate = 5-phospho-alpha-D-ribose 1-diphosphate + uracil. It functions in the pathway pyrimidine metabolism; UMP biosynthesis via salvage pathway; UMP from uracil: step 1/1. Its activity is regulated as follows. Allosterically activated by GTP. Functionally, catalyzes the conversion of uracil and 5-phospho-alpha-D-ribose 1-diphosphate (PRPP) to UMP and diphosphate. This is Uracil phosphoribosyltransferase from Francisella tularensis subsp. novicida (strain U112).